A 151-amino-acid polypeptide reads, in one-letter code: Deoxyuridine 5'-triphosphate nucleotidohydrolase (151 aa).

Substrate contacts are provided by residues Arg-70–Gly-72, Asn-83, Leu-87–Asp-89, and Met-97.

The protein belongs to the dUTPase family. In terms of assembly, homotrimer. Mg(2+) serves as cofactor.

It catalyses the reaction dUTP + H2O = dUMP + diphosphate + H(+). Its pathway is pyrimidine metabolism; dUMP biosynthesis; dUMP from dCTP (dUTP route): step 2/2. In terms of biological role, this enzyme is involved in nucleotide metabolism: it produces dUMP, the immediate precursor of thymidine nucleotides and it decreases the intracellular concentration of dUTP so that uracil cannot be incorporated into DNA. The chain is Deoxyuridine 5'-triphosphate nucleotidohydrolase from Escherichia coli (strain K12 / MC4100 / BW2952).